Consider the following 89-residue polypeptide: Small ribosomal subunit protein bS20 (89 aa).

Residues 1–12 are compositionally biased toward basic residues; that stretch reads MANIKSAKKRAK. Residues 1 to 22 are disordered; it reads MANIKSAKKRAKQTIVRNERNT.

It belongs to the bacterial ribosomal protein bS20 family.

Functionally, binds directly to 16S ribosomal RNA. This Xanthomonas oryzae pv. oryzae (strain KACC10331 / KXO85) protein is Small ribosomal subunit protein bS20.